The primary structure comprises 164 residues: UPF0305 protein MTH_812 (164 aa).

This sequence belongs to the UPF0305 family.

This is UPF0305 protein MTH_812 from Methanothermobacter thermautotrophicus (strain ATCC 29096 / DSM 1053 / JCM 10044 / NBRC 100330 / Delta H) (Methanobacterium thermoautotrophicum).